Reading from the N-terminus, the 199-residue chain is Holliday junction branch migration complex subunit RuvA (199 aa).

Positions 1 to 63 (MIDYIKGNLV…EDSQRLFGFT (63 aa)) are domain I. Residues 64 to 142 (TRTERLLFEK…DMAPMLEPAA (79 aa)) are domain II. The segment at 143–153 (GADKQQKNPQL) is flexible linker. The segment at 153-199 (LEDALEALRALGYVEKELKKVEKQLKAETLETDEYIRRALALMLKRP) is domain III.

It belongs to the RuvA family. As to quaternary structure, homotetramer. Forms an RuvA(8)-RuvB(12)-Holliday junction (HJ) complex. HJ DNA is sandwiched between 2 RuvA tetramers; dsDNA enters through RuvA and exits via RuvB. An RuvB hexamer assembles on each DNA strand where it exits the tetramer. Each RuvB hexamer is contacted by two RuvA subunits (via domain III) on 2 adjacent RuvB subunits; this complex drives branch migration. In the full resolvosome a probable DNA-RuvA(4)-RuvB(12)-RuvC(2) complex forms which resolves the HJ.

It localises to the cytoplasm. In terms of biological role, the RuvA-RuvB-RuvC complex processes Holliday junction (HJ) DNA during genetic recombination and DNA repair, while the RuvA-RuvB complex plays an important role in the rescue of blocked DNA replication forks via replication fork reversal (RFR). RuvA specifically binds to HJ cruciform DNA, conferring on it an open structure. The RuvB hexamer acts as an ATP-dependent pump, pulling dsDNA into and through the RuvAB complex. HJ branch migration allows RuvC to scan DNA until it finds its consensus sequence, where it cleaves and resolves the cruciform DNA. The polypeptide is Holliday junction branch migration complex subunit RuvA (Shouchella clausii (strain KSM-K16) (Alkalihalobacillus clausii)).